The sequence spans 125 residues: uncharacterized protein (125 aa).

The protein belongs to the anhydro-N-acetylmuramic acid kinase family.

This is an uncharacterized protein from Yersinia enterocolitica.